Here is a 76-residue protein sequence, read N- to C-terminus: Waprin-Rha1 (76 aa).

Positions 1–24 (MQARVFLLLLGVILLGMMGPMVSA) are cleaved as a signal peptide. One can recognise a WAP domain in the interval 25-75 (QDGKAGSCPDVNQPIPPLGVCKTTCATDSNCPDIQKCCKNGCGHMSCTRPS). 4 disulfide bridges follow: Cys32/Cys62, Cys45/Cys66, Cys49/Cys61, and Cys55/Cys71.

This sequence belongs to the venom waprin family. As to expression, expressed by the venom gland.

It localises to the secreted. Functionally, damages membranes of susceptible bacteria. Has no hemolytic activity. Not toxic to mice. Does not inhibit the proteinases elastase and cathepsin G. The sequence is that of Waprin-Rha1 from Rhabdophis tigrinus tigrinus (Tiger keelback snake).